The following is a 466-amino-acid chain: Cysteine--tRNA ligase (466 aa).

Residue C29 coordinates Zn(2+). The 'HIGH' region signature appears at 31-41 (PTVYNYIHIGN). Positions 209, 234, and 238 each coordinate Zn(2+). Residues 266–270 (KMSKS) carry the 'KMSKS' region motif. ATP is bound at residue K269. S270 is subject to Phosphoserine.

It belongs to the class-I aminoacyl-tRNA synthetase family. Monomer. Zn(2+) is required as a cofactor.

The protein resides in the cytoplasm. The catalysed reaction is tRNA(Cys) + L-cysteine + ATP = L-cysteinyl-tRNA(Cys) + AMP + diphosphate. This Halalkalibacterium halodurans (strain ATCC BAA-125 / DSM 18197 / FERM 7344 / JCM 9153 / C-125) (Bacillus halodurans) protein is Cysteine--tRNA ligase (cysS).